Here is a 333-residue protein sequence, read N- to C-terminus: Gamma-D-glutamyl-L-lysine dipeptidyl-peptidase (333 aa).

Positions 1–23 (MKKVGTAFLTTLFIFSSFTSAHA) are cleaved as a signal peptide. Substrate-binding positions include Glu83, Tyr118, 237 to 239 (DCS), and 256 to 257 (DS). One can recognise a NlpC/P60 domain in the interval 208 to 332 (TPAADDLINT…EEYAGARRYL (125 aa)). Residue Cys238 is the Nucleophile of the active site. Catalysis depends on His291, which acts as the Proton acceptor. His303 is an active-site residue.

This sequence belongs to the peptidase C40 family. Monomer in solution.

The catalysed reaction is The enzyme releases L-Ala-gamma-D-Glu dipeptides from cell wall peptides via cleavage of an L-Ala-gamma-D-Glu-|-L-Lys bond.. The protein operates within cell wall degradation; peptidoglycan degradation. In terms of biological role, specifically hydrolyzes gamma-D-glutamyl-L-lysine bonds in murein peptides, releasing L-Ala-D-Glu. The sequence is that of Gamma-D-glutamyl-L-lysine dipeptidyl-peptidase from Bacillus cereus (strain ATCC 10987 / NRS 248).